The chain runs to 248 residues: Ubiquinone biosynthesis O-methyltransferase (248 aa).

S-adenosyl-L-methionine is bound by residues Arg41, Gly72, Asp93, and Met136.

It belongs to the methyltransferase superfamily. UbiG/COQ3 family.

The catalysed reaction is a 3-demethylubiquinol + S-adenosyl-L-methionine = a ubiquinol + S-adenosyl-L-homocysteine + H(+). The enzyme catalyses a 3-(all-trans-polyprenyl)benzene-1,2-diol + S-adenosyl-L-methionine = a 2-methoxy-6-(all-trans-polyprenyl)phenol + S-adenosyl-L-homocysteine + H(+). Its pathway is cofactor biosynthesis; ubiquinone biosynthesis. Functionally, O-methyltransferase that catalyzes the 2 O-methylation steps in the ubiquinone biosynthetic pathway. In Sinorhizobium medicae (strain WSM419) (Ensifer medicae), this protein is Ubiquinone biosynthesis O-methyltransferase.